The primary structure comprises 218 residues: Putative NAD(P)H nitroreductase SH0546 (218 aa).

This sequence belongs to the nitroreductase family. FMN serves as cofactor.

This chain is Putative NAD(P)H nitroreductase SH0546, found in Staphylococcus haemolyticus (strain JCSC1435).